Here is a 438-residue protein sequence, read N- to C-terminus: Glutamine synthetase (438 aa).

In terms of domain architecture, GS beta-grasp spans Glu14–Thr98. The GS catalytic domain occupies Pro106–Gln438. Glu130 and Glu132 together coordinate Mg(2+). Residue Asp208 coordinates ATP. Residues Glu213 and Glu220 each coordinate Mg(2+). L-glutamate contacts are provided by residues Asn264–Gly265 and Gly265. Residue His269 participates in Mg(2+) binding. Residues Asn271 to Ser273 and Ser273 each bind ATP. L-glutamate contacts are provided by Arg321, Glu327, and Arg339. Residues Arg339, Arg344, and Lys352 each coordinate ATP. Glu357 provides a ligand contact to Mg(2+). Arg359 serves as a coordination point for L-glutamate. An O-AMP-tyrosine modification is found at Tyr397.

This sequence belongs to the glutamine synthetase family. Oligomer of 12 subunits arranged in the form of two hexameric ring. It depends on Mg(2+) as a cofactor.

It is found in the cytoplasm. It catalyses the reaction L-glutamate + NH4(+) + ATP = L-glutamine + ADP + phosphate + H(+). With respect to regulation, the activity of this enzyme could be controlled by adenylation under conditions of abundant glutamine. In terms of biological role, catalyzes the ATP-dependent biosynthesis of glutamine from glutamate and ammonia. This is Glutamine synthetase from Rhodobacter capsulatus (Rhodopseudomonas capsulata).